Consider the following 348-residue polypeptide: MENITRELFDQYISRQAQLNRVSPAAVAAKFAVDPTVQQKLEAAAQESDSFLSKINVFGVTQQIGQKVLIGSKGPLAGVNNSTTTRRNPADNSKMEPYDYMCRKVNYDYGISYEQLDAWAHQPNFQPLISSAMARQMSLDRIMIGFNGTSYADPSNRAANPLLQDCGIGFLEKIRKEAPHRVISNITVTSRDEDNKIITKGTYGNVSAAVYDAKNSLMDEWHKRNPDNVVILAGDLLTTSNFPAINAMSQTNPNTEMLAGQLIVAQERVGNMPTFIAPFFPVNGILITPFKNLSIYYQRGGLRRTIKEEPEYNRVATYQSSNDDFVVEDYGNVAFIDGITFAQPENGG.

Positions 1 to 31 (MENITRELFDQYISRQAQLNRVSPAAVAAKF) are excised as a propeptide.

Belongs to the P2-like viruses major capsid protein family.

It is found in the virion. The chain is Major capsid protein from Serratia marcescens (Serratia marcescens bacteriophage KSP20).